The sequence spans 359 residues: MFEQLNQPGLFGITNSNRDFTKKEAWGKNQFNNAFPIALACFMFSQNIKPIYIRLEKRNIEHNYFAVDQVFQINPLEAQAFFAFEHSYHPYTELIIGKTPAIDVVISNLQNSQIINAFEIKLTAIPDNTTANLPDNLQGCEIVIRPDTIVYLALSIAKVFQQNPLALLDILDPVCARIGDWEDATSIQPMIPLFCELLYTIFDRYQAVQIPILLQPIWKTQGKLSILHENCLDLFVWSNFALAKVFLDASIKPSEKSITRPERTTVWLIKMLYDFAQNGKIDYKRTLDRITFNLKNDKAFAASGMVTRKYMNSPELQNPRIKRHSIKHIIINGGQRYLSPERRLDSAIVSTPGLFEEIL.

It carries out the reaction Endonucleolytic cleavage of DNA to give specific double-stranded fragments with terminal 5'-phosphates.. Functionally, a P subtype restriction enzyme that recognizes the double-stranded sequence 5'-GRCGYC-3' and cleaves after R-2. The polypeptide is Type II restriction enzyme HgiDI (Herpetosiphon aurantiacus (Herpetosiphon giganteus)).